The following is a 182-amino-acid chain: Envelope glycoprotein L (182 aa).

An N-terminal signal peptide occupies residues 1–39; the sequence is MRRSAARGRAVSSTQTAMGAGAAIAVWAAALIALYSSCA. One can recognise a gL alphaherpesvirus-type domain in the interval 52 to 182; that stretch reads ANASDTIGRL…RPEKTAPGGV (131 aa). A disulfide bridge connects residues cysteine 73 and cysteine 109.

Belongs to the herpesviridae glycoprotein L (gL) family. Alphaherpesvirinae gL subfamily. As to quaternary structure, interacts with glycoprotein H (gH); this interaction is necessary for the correct processing and cell surface expression of gH. The heterodimer gH/gL seems to interact with gB trimers during fusion. In terms of processing, O-glycosylated, and sialylated.

It is found in the virion membrane. It localises to the host cell membrane. The protein localises to the host Golgi apparatus. The protein resides in the host trans-Golgi network. In terms of biological role, the heterodimer glycoprotein H-glycoprotein L is required for the fusion of viral and plasma membranes leading to virus entry into the host cell. Acts as a functional inhibitor of gH and maintains gH in an inhibited form. Upon binding to host integrins, gL dissociates from gH leading to activation of the viral fusion glycoproteins gB and gH. This Amazona oratrix (yellow-headed parrot) protein is Envelope glycoprotein L.